A 206-amino-acid chain; its full sequence is Large ribosomal subunit protein uL4 (206 aa).

Residues 45–75 are disordered; it reads RQGTHSTKTRGEVRGGGRKPWRQKGTGRARQ. A compositionally biased stretch (basic residues) spans 60 to 71; that stretch reads GGRKPWRQKGTG.

It belongs to the universal ribosomal protein uL4 family. Part of the 50S ribosomal subunit.

Its function is as follows. One of the primary rRNA binding proteins, this protein initially binds near the 5'-end of the 23S rRNA. It is important during the early stages of 50S assembly. It makes multiple contacts with different domains of the 23S rRNA in the assembled 50S subunit and ribosome. Functionally, forms part of the polypeptide exit tunnel. The polypeptide is Large ribosomal subunit protein uL4 (Thermoanaerobacter pseudethanolicus (strain ATCC 33223 / 39E) (Clostridium thermohydrosulfuricum)).